A 64-amino-acid polypeptide reads, in one-letter code: Beta-insect excitatory toxin OdTx12 (64 aa).

Residues glutamine 1–aspartate 59 enclose the LCN-type CS-alpha/beta domain. Intrachain disulfides connect cysteine 10/cysteine 31, cysteine 16/cysteine 36, cysteine 20/cysteine 38, and cysteine 32/cysteine 58.

This sequence belongs to the long (4 C-C) scorpion toxin superfamily. Sodium channel inhibitor family. Beta subfamily. As to expression, expressed by the venom gland.

It localises to the secreted. Functionally, excitatory insect beta-toxins induce a spastic paralysis. They bind voltage-independently at site-4 of sodium channels (Nav) and shift the voltage of activation toward more negative potentials thereby affecting sodium channel activation and promoting spontaneous and repetitive firing. In vivo, this recombinant protein is lethal to Locusta migratoria larvae after injection, but has no significant effect when orally administered. Is not toxic to mice after intracerebroventricular injection. The polypeptide is Beta-insect excitatory toxin OdTx12 (Odontobuthus doriae (Yellow Iranian scorpion)).